Consider the following 549-residue polypeptide: Urocanate hydratase (549 aa).

NAD(+) contacts are provided by residues 46–47 (GG), Gln124, Glu190, Arg195, 236–237 (NA), 257–261 (QTSAH), 267–268 (YV), and Tyr316. The active site involves Cys404. Gly486 is a binding site for NAD(+).

It belongs to the urocanase family. NAD(+) serves as cofactor.

It localises to the cytoplasm. The catalysed reaction is 4-imidazolone-5-propanoate = trans-urocanate + H2O. Its pathway is amino-acid degradation; L-histidine degradation into L-glutamate; N-formimidoyl-L-glutamate from L-histidine: step 2/3. Its function is as follows. Catalyzes the conversion of urocanate to 4-imidazolone-5-propionate. This chain is Urocanate hydratase, found in Thermoanaerobacter pseudethanolicus (strain ATCC 33223 / 39E) (Clostridium thermohydrosulfuricum).